The primary structure comprises 458 residues: Divalent metal cation transporter MntH (458 aa).

11 helical membrane-spanning segments follow: residues 38–58, 76–96, 119–139, 151–171, 180–200, 223–243, 275–295, 315–335, 370–390, 393–413, and 437–457; these read GFWK…VGYM, SLLS…AMAA, GGFL…AEII, MPLI…LLLM, AVVA…VILA, MLYL…LFLG, LTMA…LFFG, IVGA…LLAS, LMSV…EAKI, LLTF…IPLV, and FISG…LGFV.

The protein belongs to the NRAMP family.

It localises to the cell membrane. In terms of biological role, h(+)-stimulated, divalent metal cation uptake system. The sequence is that of Divalent metal cation transporter MntH from Lacticaseibacillus paracasei (strain ATCC 334 / BCRC 17002 / CCUG 31169 / CIP 107868 / KCTC 3260 / NRRL B-441) (Lactobacillus paracasei).